The sequence spans 566 residues: MLSISKTKMDFLEEGRWKDPFDELLDSRTKLSKMNIVKQNVRVTYNIDSSVENSSYIEIKEPNHKNEPLTLEDCSIKVYCPSDSISTPCDKRLGGTTGLFETDLSPITRLKLEGVEDSRDKCADTNEADLYVNVEILFQNINSSPKKCSNFGKKRLSNLNKMVTAVHPSISLNPGKWRKSLNNFIRSKITETNFTKKVERRSSICQDRKSLVLKGEHKFENKYEEDVLKYCHQCTPLPFNTAYEQHKLLNTKKIGEGAYGEVFRCSRNQEVLKDHISDIVLKIIPLEGSTVINGEKQKTFSQILPEIIITKKMCSLRTSKTNSTNGFVSIQKVSLVKGRYPPHFIKLWEKYDNEKGSENDHPELFGDNQLFAVLELKFAGSDMANFKFLNSEQSYYALQQIILALAVGEEEYQFEHRDLHLGNILIEYTNKKHIVCTFKSSNLTLLSKGVNVTIIDYTLSRVTINDCCYFNDLSRDEELFQATGDYQYDVYRMMRNELKNNWSSFSPKTNIIWLSYVIVKVLDSVKYKSINTKVHRMYIDKIKELKNIIMTFESASHCANYLFNLN.

One can recognise a Protein kinase domain in the interval 248–566 (LLNTKKIGEG…HCANYLFNLN (319 aa)). ATP contacts are provided by residues 254 to 262 (IGEGAYGEV), Lys-282, 377 to 382 (KFAGSD), 418 to 423 (DLHLGN), and 456 to 458 (DYT). Residue Asp-418 is the Proton acceptor of the active site.

The protein belongs to the protein kinase superfamily. Ser/Thr protein kinase family. Haspin subfamily. Interacts with pds5 and vtd. Requires Mg(2+) as cofactor.

The protein localises to the nucleus lamina. Its subcellular location is the chromosome. It localises to the cytoplasm. It is found in the cytoskeleton. The protein resides in the spindle. It carries out the reaction L-seryl-[protein] + ATP = O-phospho-L-seryl-[protein] + ADP + H(+). It catalyses the reaction L-threonyl-[protein] + ATP = O-phospho-L-threonyl-[protein] + ADP + H(+). Serine/threonine-protein kinase that phosphorylates histone H3 at 'Thr-4' (H3T3ph) during mitosis and interphase. Function is essential for chromosome organization during mitosis and genome organization in interphase cells, thus playing a functional role in gene regulation. During mitosis, may act through H3T3ph to both position and modulate activation of AURKB and other components of the chromosomal passenger complex (CPC) at centromeres to ensure proper chromatid cohesion, metaphase alignment and normal progression through the cell cycle. During interphase, associates with the cohesion complex and mediates pds5 binding to chromatin to ensure correct sister chromatid cohesion, chromatin organization, and also functions with Pds5-cohesin to modify Polycomb-dependent homeotic transformations. Function during interphase is required for insulator activity, nuclear compaction, heterochromatin-induced position-effect variegation and PcG-mediated pairing-sensitive silencing. The chain is Serine/threonine-protein kinase haspin homolog from Drosophila melanogaster (Fruit fly).